The chain runs to 364 residues: Nucleoporin SEH1 (364 aa).

6 WD repeats span residues 10–49 (DHKD…EWHC), 55–96 (THSG…SNDK), 111–152 (DSRT…NLSQ), 160–210 (SCKL…RKYA), 217–258 (TVTD…RESA), and 276–315 (SHNS…NWKC).

This sequence belongs to the WD repeat SEC13 family. Component of the Nup107-160 subcomplex of the nuclear pore complex (NPC). The Nup107-160 subcomplex includes NUP160, NUP133, NUP107, NUP98, NUP85, NUP43, NUP37, SEH1 and SEC13. Component of the GATOR2 subcomplex, composed of MIOS, SEC13, SEH1L, WDR24 and WDR59. The GATOR2 complex interacts with CASTOR1 and CASTOR2; the interaction is negatively regulated by arginine. The GATOR2 complex interacts with SESN1, SESN2 and SESN3; the interaction is negatively regulated by amino acids.

Its subcellular location is the chromosome. The protein localises to the centromere. It localises to the kinetochore. It is found in the nucleus. The protein resides in the nuclear pore complex. Its subcellular location is the lysosome membrane. Its activity is regulated as follows. The GATOR2 complex is negatively regulated by the upstream amino acid sensors CASTOR1 and SESN2, which sequester the GATOR2 complex in absence of amino acids. In the presence of abundant amino acids, GATOR2 is released from CASTOR1 and SESN2 and activated. In terms of biological role, component of the Nup107-160 subcomplex of the nuclear pore complex (NPC). The Nup107-160 subcomplex is required for the assembly of a functional NPC. The Nup107-160 subcomplex is also required for normal kinetochore microtubule attachment, mitotic progression and chromosome segregation. This subunit plays a role in recruitment of the Nup107-160 subcomplex to the kinetochore. Its function is as follows. As a component of the GATOR2 complex, functions as an activator of the amino acid-sensing branch of the mTORC1 signaling pathway. The GATOR2 complex indirectly activates mTORC1 through the inhibition of the GATOR1 subcomplex. GATOR2 probably acts as an E3 ubiquitin-protein ligase toward GATOR1. In the presence of abundant amino acids, the GATOR2 complex mediates ubiquitination of the NPRL2 core component of the GATOR1 complex, leading to GATOR1 inactivation. In the absence of amino acids, GATOR2 is inhibited, activating the GATOR1 complex. This is Nucleoporin SEH1 (seh1l) from Danio rerio (Zebrafish).